We begin with the raw amino-acid sequence, 483 residues long: Isocitrate dehydrogenase [NADP] (483 aa).

Thr74 is a binding site for NADP(+). D-threo-isocitrate-binding residues include Ser83, Asn85, Arg89, Arg99, and Arg121. Residue Asp232 coordinates Mg(2+). Residues 264 to 270 and Asn277 each bind NADP(+); that span reads HGSAPDI.

The protein belongs to the isocitrate and isopropylmalate dehydrogenases family. As to quaternary structure, homodimer. It depends on Mg(2+) as a cofactor. Mn(2+) is required as a cofactor.

The catalysed reaction is D-threo-isocitrate + NADP(+) = 2-oxoglutarate + CO2 + NADPH. Functionally, catalyzes the oxidative decarboxylation of isocitrate to 2-oxoglutarate and carbon dioxide with the concomitant reduction of NADP(+). The protein is Isocitrate dehydrogenase [NADP] (icd) of Rickettsia typhi (strain ATCC VR-144 / Wilmington).